The primary structure comprises 497 residues: Probable malate:quinone oxidoreductase (497 aa).

The protein belongs to the MQO family. FAD is required as a cofactor.

The enzyme catalyses (S)-malate + a quinone = a quinol + oxaloacetate. It participates in carbohydrate metabolism; tricarboxylic acid cycle; oxaloacetate from (S)-malate (quinone route): step 1/1. This chain is Probable malate:quinone oxidoreductase, found in Rhodopseudomonas palustris (strain TIE-1).